The chain runs to 438 residues: Glutamyl-tRNA(Gln) amidotransferase subunit D (438 aa).

An Asparaginase/glutaminase domain is found at 92–422; that stretch reads PEVTIIGTGG…EEVRKMMLTN (331 aa). Catalysis depends on residues Thr-102, Thr-178, Asp-179, and Lys-256.

It belongs to the asparaginase 1 family. GatD subfamily. In terms of assembly, heterodimer of GatD and GatE.

It carries out the reaction L-glutamyl-tRNA(Gln) + L-glutamine + ATP + H2O = L-glutaminyl-tRNA(Gln) + L-glutamate + ADP + phosphate + H(+). Functionally, allows the formation of correctly charged Gln-tRNA(Gln) through the transamidation of misacylated Glu-tRNA(Gln) in organisms which lack glutaminyl-tRNA synthetase. The reaction takes place in the presence of glutamine and ATP through an activated gamma-phospho-Glu-tRNA(Gln). The GatDE system is specific for glutamate and does not act on aspartate. This is Glutamyl-tRNA(Gln) amidotransferase subunit D from Pyrococcus abyssi (strain GE5 / Orsay).